We begin with the raw amino-acid sequence, 60 residues long: Large ribosomal subunit protein uL30 (60 aa).

The protein belongs to the universal ribosomal protein uL30 family. Part of the 50S ribosomal subunit.

This chain is Large ribosomal subunit protein uL30, found in Oceanobacillus iheyensis (strain DSM 14371 / CIP 107618 / JCM 11309 / KCTC 3954 / HTE831).